The primary structure comprises 152 residues: Ubiquitin-conjugating enzyme E2 W (152 aa).

Residue methionine 1 forms a Peptide (Met-Gly) (interchain with G-Cter in ubiquitin) linkage. In terms of domain architecture, UBC core spans alanine 4–valine 152. Residue cysteine 92 is the Glycyl thioester intermediate of the active site.

The protein belongs to the ubiquitin-conjugating enzyme family.

The catalysed reaction is S-ubiquitinyl-[E1 ubiquitin-activating enzyme]-L-cysteine + [E2 ubiquitin-conjugating enzyme]-L-cysteine = [E1 ubiquitin-activating enzyme]-L-cysteine + S-ubiquitinyl-[E2 ubiquitin-conjugating enzyme]-L-cysteine.. It catalyses the reaction S-ubiquitinyl-[E1 ubiquitin-activating enzyme]-L-cysteine + [acceptor protein]-N-terminal-amino acid = [E1 ubiquitin-activating enzyme]-L-cysteine + N-terminal-ubiquitinyl-[acceptor protein].. It participates in protein modification; protein ubiquitination. Accepts ubiquitin from the E1 complex and catalyzes its covalent attachment to other proteins. Together with ubc-18, required for the ubiquitination of membranous organelles, and the removal of paternal mitochondria from early embryos. The chain is Ubiquitin-conjugating enzyme E2 W from Caenorhabditis elegans.